The following is a 330-amino-acid chain: Polyprenyl transferase dpfgC (330 aa).

N-linked (GlcNAc...) asparagine glycosylation is present at asparagine 34. Transmembrane regions (helical) follow at residues 105–125 (ALCVLAAYLFCGAGMVWNDWI), 146–166 (VTTTEAMVWMTLQVIMSWGVL), 175–192 (VLKHLIPVMVASVLYPFG), 199–219 (KLMIYPQYILAFTIAWPAIPG), 237–257 (CLPLCIMVFFWTIYLNTAYSY), 273–293 (NIAGNHIHVLLVLLVSPIILA), and 310–330 (NFILGVWTILACAAEVFLTSA).

Belongs to the UbiA prenyltransferase family. It depends on Mg(2+) as a cofactor.

It localises to the membrane. The protein operates within secondary metabolite biosynthesis; terpenoid biosynthesis. In terms of biological role, polyprenyl transferase; part of the gene cluster that mediates the biosynthesis of diterpenoid pyrones. The first step of the pathway is the synthesis of the alpha-pyrone moiety by the polyketide synthase dpfgA via condensation of one acetyl-CoA starter unit with 3 malonyl-CoA units and 2 methylations. The alpha-pyrone is then combined with geranylgeranyl pyrophosphate (GGPP) formed by the GGPP synthase dpfgD through the action of the prenyltransferase dpfgC to yield a linear alpha-pyrone diterpenoid. Subsequent steps in the diterpenoid pyrone biosynthetic pathway involve the decalin core formation, which is initiated by the epoxidation of the C10-C11 olefin by the FAD-dependent oxidoreductase dpfgE, and is followed by a cyclization cascade catalyzed by the terpene cyclase dpfgB. The short chain dehydrogenase/reductase dpfgG then oxidizes the 8S hydroxy group to a ketone and the short chain dehydrogenase/reductase dpfgH reduces the ketone to the 8R hydroxy group to yield higginsianin B. Higginsianin B is further methylated by the methyltransferase dpfgI to produce the intermediate named FDDP B. The cytochrome P450 monooxygenase dfgpJ then catalyzes a three-step oxidation at C-27 to generate a carboxylic acid as well as C-26 hydroxylation. Finally, methyltransferase dpfgK methylates the carboxylic acid generated by dpfgJ, yielding the final diterpenoid pyrones from the pathway which were named FDDP D and FDDP E. This is Polyprenyl transferase dpfgC from Gibberella zeae (strain ATCC MYA-4620 / CBS 123657 / FGSC 9075 / NRRL 31084 / PH-1) (Wheat head blight fungus).